Reading from the N-terminus, the 734-residue chain is Photosystem I P700 chlorophyll a apoprotein A2 (734 aa).

A run of 8 helical transmembrane segments spans residues Ile46–Ala69, Leu135–Gln158, Leu175–Ile199, Ile273–Tyr291, Leu330–Tyr353, Ala369–Ile395, Ala417–His439, and Phe517–Val535. Residues Cys559 and Cys568 each coordinate [4Fe-4S] cluster. 2 helical membrane passes run Ala575–Trp596 and Leu643–Ile665. 3 residues coordinate chlorophyll a: His654, Met662, and Tyr670. Trp671 contributes to the phylloquinone binding site. The helical transmembrane segment at Leu707–Ala727 threads the bilayer.

The protein belongs to the PsaA/PsaB family. As to quaternary structure, the PsaA/B heterodimer binds the P700 chlorophyll special pair and subsequent electron acceptors. PSI consists of a core antenna complex that captures photons, and an electron transfer chain that converts photonic excitation into a charge separation. The eukaryotic PSI reaction center is composed of at least 11 subunits. The cofactor is P700 is a chlorophyll a/chlorophyll a' dimer, A0 is one or more chlorophyll a, A1 is one or both phylloquinones and FX is a shared 4Fe-4S iron-sulfur center..

Its subcellular location is the plastid. The protein resides in the chloroplast thylakoid membrane. The enzyme catalyses reduced [plastocyanin] + hnu + oxidized [2Fe-2S]-[ferredoxin] = oxidized [plastocyanin] + reduced [2Fe-2S]-[ferredoxin]. Functionally, psaA and PsaB bind P700, the primary electron donor of photosystem I (PSI), as well as the electron acceptors A0, A1 and FX. PSI is a plastocyanin-ferredoxin oxidoreductase, converting photonic excitation into a charge separation, which transfers an electron from the donor P700 chlorophyll pair to the spectroscopically characterized acceptors A0, A1, FX, FA and FB in turn. Oxidized P700 is reduced on the lumenal side of the thylakoid membrane by plastocyanin. This chain is Photosystem I P700 chlorophyll a apoprotein A2, found in Zygnema circumcarinatum (Green alga).